The sequence spans 148 residues: Putative pre-16S rRNA nuclease (148 aa).

It belongs to the YqgF nuclease family.

The protein localises to the cytoplasm. Could be a nuclease involved in processing of the 5'-end of pre-16S rRNA. The polypeptide is Putative pre-16S rRNA nuclease (Colwellia psychrerythraea (strain 34H / ATCC BAA-681) (Vibrio psychroerythus)).